A 340-amino-acid polypeptide reads, in one-letter code: Delta(1)-pyrroline-2-carboxylate reductase 1 (340 aa).

The active-site Charge relay system is serine 50. Histidine 51 acts as the Proton donor in catalysis. Arginine 55 is a binding site for substrate. Histidine 123–leucine 127 contributes to the NADP(+) binding site. Threonine 163 provides a ligand contact to substrate. Aspartate 181–alanine 183 contributes to the NADP(+) binding site. Arginine 189 to glycine 190 contributes to the substrate binding site. Aspartate 191 serves as the catalytic Charge relay system. Residues histidine 232–lysine 233 and arginine 307–arginine 313 contribute to the NADP(+) site.

It belongs to the LDH2/MDH2 oxidoreductase family. As to quaternary structure, homodimer.

It carries out the reaction L-proline + NAD(+) = 1-pyrroline-2-carboxylate + NADH + H(+). The enzyme catalyses L-proline + NADP(+) = 1-pyrroline-2-carboxylate + NADPH + H(+). In terms of biological role, catalyzes the reduction of Delta(1)-pyrroline-2-carboxylate (Pyr2C) to L-proline, using NADPH as the electron donor. May be involved in a degradation pathway that converts trans-3-hydroxy-L-proline (t3LHyp) to L-proline. This is Delta(1)-pyrroline-2-carboxylate reductase 1 from Burkholderia ambifaria (strain ATCC BAA-244 / DSM 16087 / CCUG 44356 / LMG 19182 / AMMD) (Burkholderia cepacia (strain AMMD)).